The chain runs to 515 residues: 2-isopropylmalate synthase (515 aa).

Residues 5–267 (VIIFDTTLRD…STGIKHEEIH (263 aa)) form the Pyruvate carboxyltransferase domain. Mn(2+) is bound by residues Asp14, His202, His204, and Asn238. The segment at 392-515 (KLNYLSVQSG…EMKQKKIATV (124 aa)) is regulatory domain.

It belongs to the alpha-IPM synthase/homocitrate synthase family. LeuA type 1 subfamily. Homodimer. The cofactor is Mn(2+).

It localises to the cytoplasm. It catalyses the reaction 3-methyl-2-oxobutanoate + acetyl-CoA + H2O = (2S)-2-isopropylmalate + CoA + H(+). It functions in the pathway amino-acid biosynthesis; L-leucine biosynthesis; L-leucine from 3-methyl-2-oxobutanoate: step 1/4. In terms of biological role, catalyzes the condensation of the acetyl group of acetyl-CoA with 3-methyl-2-oxobutanoate (2-ketoisovalerate) to form 3-carboxy-3-hydroxy-4-methylpentanoate (2-isopropylmalate). This chain is 2-isopropylmalate synthase, found in Vibrio parahaemolyticus serotype O3:K6 (strain RIMD 2210633).